The chain runs to 213 residues: MAKVFFITGIDTDIGKTIATGWYAKKLMQQGASVITQKMIQTGCRGIAEDLLTHRKIQGIELTEEDKQGITCPYVFDYPCSPHLAAKLEQRTIERKKIETCTALLCEKYDYVLLEGAGGLCVPYNEEETTLDYLCQHQYPVILVTSGKLGSINHTLLSLQVLNSKRVSVHAVIYNLYPETDQVISQETQHFLRRYLEKYSPNTLFEVMDLISV.

Residue 13-18 participates in ATP binding; it reads DIGKTI. Thr-17 contributes to the Mg(2+) binding site. The active site involves Lys-38. Residue Thr-42 coordinates substrate. ATP contacts are provided by residues Asp-50 and 115-118; that span reads EGAG. Mg(2+)-binding residues include Asp-50 and Glu-115.

This sequence belongs to the dethiobiotin synthetase family. Homodimer. Mg(2+) serves as cofactor.

The protein localises to the cytoplasm. It catalyses the reaction (7R,8S)-7,8-diammoniononanoate + CO2 + ATP = (4R,5S)-dethiobiotin + ADP + phosphate + 3 H(+). It functions in the pathway cofactor biosynthesis; biotin biosynthesis; biotin from 7,8-diaminononanoate: step 1/2. Catalyzes a mechanistically unusual reaction, the ATP-dependent insertion of CO2 between the N7 and N8 nitrogen atoms of 7,8-diaminopelargonic acid (DAPA, also called 7,8-diammoniononanoate) to form a ureido ring. The protein is ATP-dependent dethiobiotin synthetase BioD 2 of Pasteurella multocida (strain Pm70).